We begin with the raw amino-acid sequence, 301 residues long: Glycerol-3-phosphate dehydrogenase [NAD(P)+] (301 aa).

3 residues coordinate NADPH: W13, R33, and K78. Residues K78 and G106 each coordinate sn-glycerol 3-phosphate. A110 lines the NADPH pocket. Sn-glycerol 3-phosphate contacts are provided by K161, D214, S224, R225, and N226. Catalysis depends on K161, which acts as the Proton acceptor. R225 contacts NADPH. E251 serves as a coordination point for NADPH.

Belongs to the NAD-dependent glycerol-3-phosphate dehydrogenase family.

The protein localises to the cytoplasm. The catalysed reaction is sn-glycerol 3-phosphate + NAD(+) = dihydroxyacetone phosphate + NADH + H(+). The enzyme catalyses sn-glycerol 3-phosphate + NADP(+) = dihydroxyacetone phosphate + NADPH + H(+). Its pathway is membrane lipid metabolism; glycerophospholipid metabolism. Catalyzes the reduction of the glycolytic intermediate dihydroxyacetone phosphate (DHAP) to sn-glycerol 3-phosphate (G3P), the key precursor for phospholipid synthesis. In Synechococcus sp. (strain RCC307), this protein is Glycerol-3-phosphate dehydrogenase [NAD(P)+].